Consider the following 100-residue polypeptide: Urease subunit gamma (100 aa).

Belongs to the urease gamma subunit family. As to quaternary structure, heterotrimer of UreA (gamma), UreB (beta) and UreC (alpha) subunits. Three heterotrimers associate to form the active enzyme.

It is found in the cytoplasm. It carries out the reaction urea + 2 H2O + H(+) = hydrogencarbonate + 2 NH4(+). It functions in the pathway nitrogen metabolism; urea degradation; CO(2) and NH(3) from urea (urease route): step 1/1. The protein is Urease subunit gamma of Yersinia aldovae.